Reading from the N-terminus, the 100-residue chain is Integration host factor subunit alpha (100 aa).

It belongs to the bacterial histone-like protein family. Heterodimer of an alpha and a beta chain.

In terms of biological role, this protein is one of the two subunits of integration host factor, a specific DNA-binding protein that functions in genetic recombination as well as in transcriptional and translational control. The chain is Integration host factor subunit alpha from Rhizorhabdus wittichii (strain DSM 6014 / CCUG 31198 / JCM 15750 / NBRC 105917 / EY 4224 / RW1) (Sphingomonas wittichii).